Reading from the N-terminus, the 500-residue chain is Probable cytosol aminopeptidase (500 aa).

Positions 264 and 269 each coordinate Mn(2+). Residue Lys-276 is part of the active site. Mn(2+) contacts are provided by Asp-287, Asp-346, and Glu-348. Arg-350 is a catalytic residue.

Belongs to the peptidase M17 family. Mn(2+) is required as a cofactor.

Its subcellular location is the cytoplasm. It carries out the reaction Release of an N-terminal amino acid, Xaa-|-Yaa-, in which Xaa is preferably Leu, but may be other amino acids including Pro although not Arg or Lys, and Yaa may be Pro. Amino acid amides and methyl esters are also readily hydrolyzed, but rates on arylamides are exceedingly low.. The enzyme catalyses Release of an N-terminal amino acid, preferentially leucine, but not glutamic or aspartic acids.. In terms of biological role, presumably involved in the processing and regular turnover of intracellular proteins. Catalyzes the removal of unsubstituted N-terminal amino acids from various peptides. The chain is Probable cytosol aminopeptidase from Nitrobacter hamburgensis (strain DSM 10229 / NCIMB 13809 / X14).